Reading from the N-terminus, the 201-residue chain is Glycerol-3-phosphate acyltransferase (201 aa).

Helical transmembrane passes span 10 to 30, 60 to 80, 86 to 106, 116 to 136, and 166 to 186; these read MLIG…GLIL, LAAA…LIAA, AAIA…WIGF, LGVL…AWIV, and ALAA…RANI.

The protein belongs to the PlsY family. Probably interacts with PlsX.

The protein localises to the cell inner membrane. The catalysed reaction is an acyl phosphate + sn-glycerol 3-phosphate = a 1-acyl-sn-glycero-3-phosphate + phosphate. It participates in lipid metabolism; phospholipid metabolism. Functionally, catalyzes the transfer of an acyl group from acyl-phosphate (acyl-PO(4)) to glycerol-3-phosphate (G3P) to form lysophosphatidic acid (LPA). This enzyme utilizes acyl-phosphate as fatty acyl donor, but not acyl-CoA or acyl-ACP. This Brucella abortus (strain 2308) protein is Glycerol-3-phosphate acyltransferase.